A 203-amino-acid chain; its full sequence is Dephospho-CoA kinase (203 aa).

Positions Ile5–His203 constitute a DPCK domain. An ATP-binding site is contributed by Ala13 to Ala18.

Belongs to the CoaE family.

The protein resides in the cytoplasm. The enzyme catalyses 3'-dephospho-CoA + ATP = ADP + CoA + H(+). It functions in the pathway cofactor biosynthesis; coenzyme A biosynthesis; CoA from (R)-pantothenate: step 5/5. In terms of biological role, catalyzes the phosphorylation of the 3'-hydroxyl group of dephosphocoenzyme A to form coenzyme A. This Xanthomonas euvesicatoria pv. vesicatoria (strain 85-10) (Xanthomonas campestris pv. vesicatoria) protein is Dephospho-CoA kinase.